The sequence spans 150 residues: Large ribosomal subunit protein bL9 (150 aa).

This sequence belongs to the bacterial ribosomal protein bL9 family.

In terms of biological role, binds to the 23S rRNA. In Streptococcus pyogenes serotype M18 (strain MGAS8232), this protein is Large ribosomal subunit protein bL9.